The primary structure comprises 357 residues: Membrane-bound lytic murein transglycosylase C (357 aa).

The first 16 residues, 1-16, serve as a signal peptide directing secretion; sequence MKKILPLVIIAPLLIS. Cys17 carries the N-palmitoyl cysteine lipid modification. Residue Cys17 is the site of S-diacylglycerol cysteine attachment.

It belongs to the transglycosylase Slt family.

The protein resides in the cell outer membrane. It carries out the reaction Exolytic cleavage of the (1-&gt;4)-beta-glycosidic linkage between N-acetylmuramic acid (MurNAc) and N-acetylglucosamine (GlcNAc) residues in peptidoglycan, from either the reducing or the non-reducing ends of the peptidoglycan chains, with concomitant formation of a 1,6-anhydrobond in the MurNAc residue.. Functionally, murein-degrading enzyme. May play a role in recycling of muropeptides during cell elongation and/or cell division. The sequence is that of Membrane-bound lytic murein transglycosylase C from Sodalis glossinidius (strain morsitans).